We begin with the raw amino-acid sequence, 391 residues long: Inactive polyketide synthase 2 (391 aa).

The active site involves Cys-164.

The protein belongs to the thiolase-like superfamily. Chalcone/stilbene synthases family. As to quaternary structure, homodimer.

In Rubus idaeus (Raspberry), this protein is Inactive polyketide synthase 2 (PKS2).